The following is a 183-amino-acid chain: Porphobilinogen deaminase (183 aa).

Belongs to the HMBS family. As to quaternary structure, monomer. The cofactor is dipyrromethane.

The enzyme catalyses 4 porphobilinogen + H2O = hydroxymethylbilane + 4 NH4(+). It participates in porphyrin-containing compound metabolism; protoporphyrin-IX biosynthesis; coproporphyrinogen-III from 5-aminolevulinate: step 2/4. Functionally, tetrapolymerization of the monopyrrole PBG into the hydroxymethylbilane pre-uroporphyrinogen in several discrete steps. This Yersinia intermedia protein is Porphobilinogen deaminase (hemC).